The following is a 73-amino-acid chain: MAKPLGTTGEFFRRRDEWRKHPMLSNQMRHALPGLGIGVAAFCVYLVGEQIYNKALAPSKSSHHHQEQTAPSH.

The chain crosses the membrane as a helical span at residues 31–48 (ALPGLGIGVAAFCVYLVG).

The protein belongs to the complex I NDUFB3 subunit family. As to quaternary structure, complex I is composed of at least 49 different subunits.

The protein resides in the mitochondrion inner membrane. Its function is as follows. Accessory subunit of the mitochondrial membrane respiratory chain NADH dehydrogenase (Complex I), that is believed not to be involved in catalysis. Complex I functions in the transfer of electrons from NADH to the respiratory chain. The immediate electron acceptor for the enzyme is believed to be ubiquinone. The protein is NADH dehydrogenase [ubiquinone] 1 beta subcomplex subunit 3-B of Arabidopsis thaliana (Mouse-ear cress).